The primary structure comprises 1017 residues: Disease resistance protein RML1B (1017 aa).

The region spanning 12 to 176 (YKFNVFASFH…KIARDVLDKL (165 aa)) is the TIR domain. Residue Glu87 is part of the active site. An NB-ARC domain is found at 191–447 (EAHLREIKSL…HIAIFFNKED (257 aa)). LRR repeat units lie at residues 539-562 (ISRI…QFLK), 583-605 (PCLL…TFNP), 606-628 (EHLV…TQPL), 629-652 (KNLK…SNAT), 654-675 (LEYL…ISHL), 676-698 (HKLE…HMNL), 699-724 (ESLQ…NIRY), 738-760 (CPGL…THLP), 761-782 (TSLT…CFKS), and 784-809 (HQLK…SLLT).

It catalyses the reaction NAD(+) + H2O = ADP-D-ribose + nicotinamide + H(+). Its function is as follows. TIR-NB-LRR receptor-like protein that confers resistance to the pathogen Leptosphaeria maculans (blackleg disease). This is Disease resistance protein RML1B from Arabidopsis thaliana (Mouse-ear cress).